The chain runs to 227 residues: Cytochrome c oxidase subunit 2 (227 aa).

Residues 1–14 (MAYPMQLGFQDATS) are Mitochondrial intermembrane-facing. A helical transmembrane segment spans residues 15 to 45 (PIMEELLHFHDHTLMIVFLISSLVLYIISLM). Residues 46–59 (LTTKLTHTSTMDAQ) are Mitochondrial matrix-facing. A helical transmembrane segment spans residues 60–87 (EVETVWTILPAIILIMIALPSLRILYMM). The Mitochondrial intermembrane portion of the chain corresponds to 88–227 (DEINNPSLTV…YFEKWSASML (140 aa)). Cu cation contacts are provided by His161, Cys196, Glu198, Cys200, His204, and Met207. Residue Glu198 coordinates Mg(2+). Tyr218 carries the phosphotyrosine modification.

This sequence belongs to the cytochrome c oxidase subunit 2 family. Component of the cytochrome c oxidase (complex IV, CIV), a multisubunit enzyme composed of 14 subunits. The complex is composed of a catalytic core of 3 subunits MT-CO1, MT-CO2 and MT-CO3, encoded in the mitochondrial DNA, and 11 supernumerary subunits COX4I, COX5A, COX5B, COX6A, COX6B, COX6C, COX7A, COX7B, COX7C, COX8 and NDUFA4, which are encoded in the nuclear genome. The complex exists as a monomer or a dimer and forms supercomplexes (SCs) in the inner mitochondrial membrane with NADH-ubiquinone oxidoreductase (complex I, CI) and ubiquinol-cytochrome c oxidoreductase (cytochrome b-c1 complex, complex III, CIII), resulting in different assemblies (supercomplex SCI(1)III(2)IV(1) and megacomplex MCI(2)III(2)IV(2)). Found in a complex with TMEM177, COA6, COX18, COX20, SCO1 and SCO2. Interacts with TMEM177 in a COX20-dependent manner. Interacts with COX20. Interacts with COX16. Cu cation serves as cofactor.

The protein localises to the mitochondrion inner membrane. The enzyme catalyses 4 Fe(II)-[cytochrome c] + O2 + 8 H(+)(in) = 4 Fe(III)-[cytochrome c] + 2 H2O + 4 H(+)(out). Functionally, component of the cytochrome c oxidase, the last enzyme in the mitochondrial electron transport chain which drives oxidative phosphorylation. The respiratory chain contains 3 multisubunit complexes succinate dehydrogenase (complex II, CII), ubiquinol-cytochrome c oxidoreductase (cytochrome b-c1 complex, complex III, CIII) and cytochrome c oxidase (complex IV, CIV), that cooperate to transfer electrons derived from NADH and succinate to molecular oxygen, creating an electrochemical gradient over the inner membrane that drives transmembrane transport and the ATP synthase. Cytochrome c oxidase is the component of the respiratory chain that catalyzes the reduction of oxygen to water. Electrons originating from reduced cytochrome c in the intermembrane space (IMS) are transferred via the dinuclear copper A center (CU(A)) of subunit 2 and heme A of subunit 1 to the active site in subunit 1, a binuclear center (BNC) formed by heme A3 and copper B (CU(B)). The BNC reduces molecular oxygen to 2 water molecules using 4 electrons from cytochrome c in the IMS and 4 protons from the mitochondrial matrix. The chain is Cytochrome c oxidase subunit 2 (MT-CO2) from Capra hircus (Goat).